A 328-amino-acid polypeptide reads, in one-letter code: Transcription initiation factor IIB 4 (328 aa).

Basic and acidic residues-rich tracts occupy residues methionine 1–histidine 12 and arginine 21–cysteine 32. A disordered region spans residues methionine 1–glutamate 47. A TFIIB-type zinc finger spans residues glutamate 28–glutamate 58. 4 residues coordinate Zn(2+): cysteine 32, cysteine 35, cysteine 50, and cysteine 53. 2 tandem repeats follow at residues glycine 144–leucine 227 and serine 238–aspartate 319.

The protein belongs to the TFIIB family.

Stabilizes TBP binding to an archaeal box-A promoter. Also responsible for recruiting RNA polymerase II to the pre-initiation complex (DNA-TBP-TFIIB). The chain is Transcription initiation factor IIB 4 from Halobacterium salinarum (strain ATCC 700922 / JCM 11081 / NRC-1) (Halobacterium halobium).